Here is a 360-residue protein sequence, read N- to C-terminus: DNA replication and repair protein RecF (360 aa).

An ATP-binding site is contributed by 30-37 (GQNGSGKT).

The protein belongs to the RecF family.

It is found in the cytoplasm. Functionally, the RecF protein is involved in DNA metabolism; it is required for DNA replication and normal SOS inducibility. RecF binds preferentially to single-stranded, linear DNA. It also seems to bind ATP. This chain is DNA replication and repair protein RecF, found in Shewanella sp. (strain MR-7).